The sequence spans 466 residues: Neuraminidase (466 aa).

The Intravirion segment spans residues 1-8; that stretch reads MLPSTVQT. A helical transmembrane segment spans residues 9–31; sequence LTLLLTSGGVLLSLYVSASLSYL. The segment at 13 to 35 is involved in apical transport and lipid raft association; that stretch reads LTSGGVLLSLYVSASLSYLLYSD. At 32–466 the chain is on the virion surface side; that stretch reads LYSDVLLKFS…DTVTGVDMAL (435 aa). The segment at 38–86 is hypervariable stalk region; sequence LKFSSTKTTAPTMSLECTNASNAQTVNHSATKEMTFPPPEPEWTYPRLS. Residues N56 and N64 are each glycosylated (N-linked (GlcNAc...) asparagine; by host). 8 cysteine pairs are disulfide-bonded: C87/C420, C122/C127, C182/C229, C231/C236, C277/C291, C279/C289, C318/C337, and C424/C447. The interval 89-466 is head of neuraminidase; it reads GSTFQKALLI…DTVTGVDMAL (378 aa). R116 lines the substrate pocket. N144 carries N-linked (GlcNAc...) asparagine; by host glycosylation. The active-site Proton donor/acceptor is the D149. Residue R150 coordinates substrate. Residue 275–276 coordinates substrate; sequence EE. The N-linked (GlcNAc...) asparagine; by host glycan is linked to N284. A substrate-binding site is contributed by R292. Ca(2+)-binding residues include D293, T297, D324, and G346. R374 lines the substrate pocket. Y409 (nucleophile) is an active-site residue.

It belongs to the glycosyl hydrolase 34 family. In terms of assembly, homotetramer. The cofactor is Ca(2+). N-glycosylated.

The protein localises to the virion membrane. Its subcellular location is the host apical cell membrane. It carries out the reaction Hydrolysis of alpha-(2-&gt;3)-, alpha-(2-&gt;6)-, alpha-(2-&gt;8)- glycosidic linkages of terminal sialic acid residues in oligosaccharides, glycoproteins, glycolipids, colominic acid and synthetic substrates.. With respect to regulation, inhibited by the neuraminidase inhibitors zanamivir (Relenza) and oseltamivir (Tamiflu). These drugs interfere with the release of progeny virus from infected cells and are effective against all influenza strains. Resistance to neuraminidase inhibitors is quite rare. Functionally, catalyzes the removal of terminal sialic acid residues from viral and cellular glycoconjugates. Cleaves off the terminal sialic acids on the glycosylated HA during virus budding to facilitate virus release. Additionally helps virus spread through the circulation by further removing sialic acids from the cell surface. These cleavages prevent self-aggregation and ensure the efficient spread of the progeny virus from cell to cell. Otherwise, infection would be limited to one round of replication. Described as a receptor-destroying enzyme because it cleaves a terminal sialic acid from the cellular receptors. May facilitate viral invasion of the upper airways by cleaving the sialic acid moieties on the mucin of the airway epithelial cells. Likely to plays a role in the budding process through its association with lipid rafts during intracellular transport. May additionally display a raft-association independent effect on budding. Plays a role in the determination of host range restriction on replication and virulence. Sialidase activity in late endosome/lysosome traffic seems to enhance virus replication. The chain is Neuraminidase from Influenza B virus (strain B/Lee/1940).